The sequence spans 99 residues: YcgL domain-containing protein HD_1373 (99 aa).

The YcgL domain occupies 8 to 92 (NFCAIYKSMS…PAENLLKQFL (85 aa)).

This Haemophilus ducreyi (strain 35000HP / ATCC 700724) protein is YcgL domain-containing protein HD_1373.